A 527-amino-acid polypeptide reads, in one-letter code: Cytochrome P450 monooxygenase aba2 (527 aa).

The helical transmembrane segment at 26-46 (TTVAVLVTVALIAQVLWKIFF) threads the bilayer. Residues N189, N420, and N448 are each glycosylated (N-linked (GlcNAc...) asparagine). Position 460 (C460) interacts with heme. An N-linked (GlcNAc...) asparagine glycan is attached at N464.

It belongs to the cytochrome P450 family. The cofactor is heme.

The protein resides in the membrane. The protein operates within hormone biosynthesis. Its function is as follows. Cytochrome P450 monooxygenase; part of the gene cluster that mediates the biosynthesis of abscisic acid (ABA), a phytohormone that acts antagonistically toward salicylic acid (SA), jasmonic acid (JA) and ethylene (ETH) signaling, to impede plant defense responses. The first step of the pathway catalyzes the reaction from farnesyl diphosphate to alpha-ionylideneethane performed by the alpha-ionylideneethane synthase aba3 via a three-step reaction mechanism involving 2 neutral intermediates, beta-farnesene and allofarnesene. The cytochrome P450 monooxygenase aba1 might then be involved in the conversion of alpha-ionylideneethane to alpha-ionylideneacetic acid. Alpha-ionylideneacetic acid is further converted to abscisic acid in 2 steps involving the cytochrome P450 monooxygenase aba2 and the short-chain dehydrogenase/reductase aba4, via the intermediates 1'-deoxy-ABA or 1',4'-trans-diol-ABA, depending on the order of action of these 2 enzymes. Aba2 is responsible for the hydroxylation of carbon atom C-1' and aba4 might be involved in the oxidation of the C-4' carbon atom. This is Cytochrome P450 monooxygenase aba2 (aba2) from Botryotinia fuckeliana (strain B05.10) (Noble rot fungus).